The primary structure comprises 103 residues: Hexon-interlacing protein (103 aa).

Positions 25-45 (RQNVTGSDLGGKPVPSDVLES) are disordered. The stretch at 72-99 (LDDLKTQVAAMQNSVTAIQEELKDLKQR) forms a coiled coil.

The protein belongs to the adenoviridae hexon-interlacing protein family. Homotrimer. Interacts with hexon protein; this interaction tethers the hexons together. Self-interacts with adjacent proteins. Interacts with kinesin light chain KLC1; this interaction leads to capsid disruption at the nuclear pore complex during virus entry into host cell.

Its subcellular location is the virion. The protein localises to the host nucleus. In terms of biological role, structural component of the virion that acts as a cement protein on the capsid exterior and forms triskelion structures consisting of three molecules that stabilize three hexon trimers at the center of each icosahedral facet and fixes the peripentonal hexons. Dispensable for assembly. During virus entry, recruits the anterograde motor kinesin-1 to the capsid docked at the nuclear pore complex thereby subjecting the docked capsid to a pulling force. The resulting tension leads to capsid disruption, dispersion of capsid fragments toward cell periphery and eventually viral DNA entry into the host nucleus. In Canine adenovirus serotype 1 (strain CLL) (CAdV-1), this protein is Hexon-interlacing protein.